Here is a 269-residue protein sequence, read N- to C-terminus: MLRLLSSLLLVALASGCGQPSHNPSSRVVNGEEAVPHSWPWQVSLQYEKDGSFHHTCGGSLITPDWVLTAGHCISTSRTYQVVLGEHERGVEEGQEQVIPINAGDLFVHPKWNSMCVSCGNDIALVKLSRSAQLGDAVQLACLPPAGEILPNGAPCYISGWGRLSTNGPLPDKLQQALLPVVDYEHCSRWNWWGLSVKTTMVCAGGDIQSGCNGDSGGPLNCPADNGTWQVHGVTSFVSSLGCNTLRKPTVFTRVSAFIDWIEETIANN.

Positions 1–16 (MLRLLSSLLLVALASG) are cleaved as a signal peptide. A propeptide spans 17 to 27 (CGQPSHNPSSR) (activation peptide). In terms of domain architecture, Peptidase S1 spans 28 to 267 (VVNGEEAVPH…FIDWIEETIA (240 aa)). Cysteine 57 and cysteine 73 are oxidised to a cystine. Active-site charge relay system residues include histidine 72 and aspartate 122. Disulfide bonds link cysteine 156–cysteine 222, cysteine 187–cysteine 203, and cysteine 212–cysteine 243. Serine 216 functions as the Charge relay system in the catalytic mechanism.

This sequence belongs to the peptidase S1 family. Elastase subfamily.

The catalysed reaction is Preferential cleavage: Ala-|-Xaa. Does not hydrolyze elastin.. Functionally, efficient protease with alanine specificity but only little elastolytic activity. This Mus musculus (Mouse) protein is Chymotrypsin-like elastase family member 3B (Cela3b).